Here is a 195-residue protein sequence, read N- to C-terminus: TM2 domain-containing protein C41D11.9 (195 aa).

An N-terminal signal peptide occupies residues 1–20; that stretch reads MLHKILFLICLASFIPTIGS. Topologically, residues 21–136 are extracellular; the sequence is ISGTKDVKSK…NWSSGYSWTK (116 aa). N-linked (GlcNAc...) asparagine glycosylation is found at Asn-55, Asn-93, and Asn-127. The TM2 domain maps to 131-179; it reads GYSWTKTMILSVVLGGFGADRFYLGLWKSAIGKLFSFGGLGVWTLVDVV. The helical transmembrane segment at 137–157 threads the bilayer; that stretch reads TMILSVVLGGFGADRFYLGLW. The Cytoplasmic portion of the chain corresponds to 158–163; the sequence is KSAIGK. The chain crosses the membrane as a helical span at residues 164–184; it reads LFSFGGLGVWTLVDVVLIAVG. Residues 185–195 are Extracellular-facing; the sequence is YIKPYDGSMYI.

The protein belongs to the TM2 family.

The protein localises to the membrane. The sequence is that of TM2 domain-containing protein C41D11.9 from Caenorhabditis elegans.